The sequence spans 309 residues: Aspartate carbamoyltransferase catalytic subunit (309 aa).

Residues Arg-55 and Thr-56 each coordinate carbamoyl phosphate. Lys-85 is a binding site for L-aspartate. Residues Arg-106, His-135, and Gln-138 each contribute to the carbamoyl phosphate site. Arg-168 and Arg-230 together coordinate L-aspartate. Residues Leu-268 and Pro-269 each contribute to the carbamoyl phosphate site.

The protein belongs to the aspartate/ornithine carbamoyltransferase superfamily. ATCase family. Heterododecamer (2C3:3R2) of six catalytic PyrB chains organized as two trimers (C3), and six regulatory PyrI chains organized as three dimers (R2).

The catalysed reaction is carbamoyl phosphate + L-aspartate = N-carbamoyl-L-aspartate + phosphate + H(+). It functions in the pathway pyrimidine metabolism; UMP biosynthesis via de novo pathway; (S)-dihydroorotate from bicarbonate: step 2/3. Functionally, catalyzes the condensation of carbamoyl phosphate and aspartate to form carbamoyl aspartate and inorganic phosphate, the committed step in the de novo pyrimidine nucleotide biosynthesis pathway. This is Aspartate carbamoyltransferase catalytic subunit from Aliivibrio fischeri (strain MJ11) (Vibrio fischeri).